Reading from the N-terminus, the 275-residue chain is Phosphonates import ATP-binding protein PhnC (275 aa).

One can recognise an ABC transporter domain in the interval 2-246 (LKIENLTKRY…ALTEIYGEEE (245 aa)). 35–42 (GPSGAGKS) contributes to the ATP binding site.

Belongs to the ABC transporter superfamily. Phosphonates importer (TC 3.A.1.9.1) family. As to quaternary structure, the complex is composed of two ATP-binding proteins (PhnC), two transmembrane proteins (PhnE) and a solute-binding protein (PhnD).

It is found in the cell inner membrane. It catalyses the reaction phosphonate(out) + ATP + H2O = phosphonate(in) + ADP + phosphate + H(+). Functionally, part of the ABC transporter complex PhnCDE involved in phosphonates import. Responsible for energy coupling to the transport system. The polypeptide is Phosphonates import ATP-binding protein PhnC (Wolinella succinogenes (strain ATCC 29543 / DSM 1740 / CCUG 13145 / JCM 31913 / LMG 7466 / NCTC 11488 / FDC 602W) (Vibrio succinogenes)).